The sequence spans 553 residues: Dihydroxy-acid dehydratase (553 aa).

D78 contributes to the Mg(2+) binding site. Residue C119 participates in [2Fe-2S] cluster binding. Mg(2+)-binding residues include D120 and K121. K121 is modified (N6-carboxylysine). C193 contributes to the [2Fe-2S] cluster binding site. E441 provides a ligand contact to Mg(2+). Residue S467 is the Proton acceptor of the active site.

The protein belongs to the IlvD/Edd family. Homodimer. Requires [2Fe-2S] cluster as cofactor. It depends on Mg(2+) as a cofactor.

It carries out the reaction (2R)-2,3-dihydroxy-3-methylbutanoate = 3-methyl-2-oxobutanoate + H2O. The catalysed reaction is (2R,3R)-2,3-dihydroxy-3-methylpentanoate = (S)-3-methyl-2-oxopentanoate + H2O. The protein operates within amino-acid biosynthesis; L-isoleucine biosynthesis; L-isoleucine from 2-oxobutanoate: step 3/4. It participates in amino-acid biosynthesis; L-valine biosynthesis; L-valine from pyruvate: step 3/4. Functions in the biosynthesis of branched-chain amino acids. Catalyzes the dehydration of (2R,3R)-2,3-dihydroxy-3-methylpentanoate (2,3-dihydroxy-3-methylvalerate) into 2-oxo-3-methylpentanoate (2-oxo-3-methylvalerate) and of (2R)-2,3-dihydroxy-3-methylbutanoate (2,3-dihydroxyisovalerate) into 2-oxo-3-methylbutanoate (2-oxoisovalerate), the penultimate precursor to L-isoleucine and L-valine, respectively. The chain is Dihydroxy-acid dehydratase from Geobacter sp. (strain M21).